An 806-amino-acid chain; its full sequence is Transitional endoplasmic reticulum ATPase (806 aa).

Alanine 2 bears the N-acetylalanine mark. Residues serine 3 and serine 7 each carry the phosphoserine modification. Lysine 8 is covalently cross-linked (Glycyl lysine isopeptide (Lys-Gly) (interchain with G-Cter in SUMO2)). Phosphoserine is present on serine 13. A Glycyl lysine isopeptide (Lys-Gly) (interchain with G-Cter in SUMO2) cross-link involves residue lysine 18. Serine 37 is subject to Phosphoserine. ATP is bound at residue 247-253 (PGTGKTL). Lysine 315 carries the N6,N6,N6-trimethyllysine; by VCPKMT modification. Positions 348 and 384 each coordinate ATP. At threonine 436 the chain carries Phosphothreonine. Serine 462 carries the post-translational modification Phosphoserine. 2 positions are modified to N6-acetyllysine: lysine 502 and lysine 505. Position 521 to 526 (521 to 526 (GCGKTL)) interacts with ATP. At lysine 668 the chain carries N6-acetyllysine; alternate. Lysine 668 carries the N6-succinyllysine; alternate modification. Serine 702 carries the phosphoserine modification. Residues 708–727 (RRERERQTNPSAMEVEEDDP) form a disordered region. Lysine 754 is subject to N6-acetyllysine. The disordered stretch occupies residues 768 to 806 (FGSFRFPSGNQGGAGPSQGSGGGTGGNVYTEDNDDDLYG). Serine 770, serine 775, and serine 787 each carry phosphoserine. Gly residues predominate over residues 777–793 (NQGGAGPSQGSGGGTGG). The interval 797–806 (TEDNDDDLYG) is interaction with UBXN6. Positions 802 to 806 (DDLYG) match the PIM motif motif. Phosphotyrosine is present on tyrosine 805.

This sequence belongs to the AAA ATPase family. Homohexamer. Forms a ring-shaped particle of 12.5 nm diameter, that displays 6-fold radial symmetry. Part of a ternary complex containing STX5A, NSFL1C and VCP. NSFL1C forms a homotrimer that binds to one end of a VCP homohexamer. The complex binds to membranes enriched in phosphatidylethanolamine-containing lipids and promotes Golgi membrane fusion. Binds to a heterodimer of NPLOC4 and UFD1, binding to this heterodimer inhibits Golgi-membrane fusion. Interaction with VCIP135 leads to dissociation of the complex via ATP hydrolysis by VCP. Part of a ternary complex containing NPLOC4, UFD1 and VCP. Interacts with NSFL1C-like protein p37; the complex has membrane fusion activity and is required for Golgi and endoplasmic reticulum biogenesis. Interacts with SELENOS and SYVN1, as well as with DERL1 (via SHP-box motif), DERL2 and DERL3; which probably transfer misfolded proteins from the ER to VCP. Interacts with SVIP and DERL1. Component of a complex required to couple retrotranslocation, ubiquitination and deglycosylation composed of NGLY1, SAKS1, AMFR, VCP and RAD23B. Part of a complex composed of STUB1/CHIP, VCP/p97, CHRNA3, and UBXN2A that modulates the ubiquitination and endoplasmic reticulum-associated degradation (ERAD) of CHRNA3. Within the complex UBXN2A acts as a scaffold protein required for the interaction of CHRNA3 with VCP/p97, this interaction also inhibits CHRNA3 ubiquitination by STUB1/CHIP and subsequently ERAD. Interacts with UBXN2A (via UBX domain); the interaction is required for the interaction of CHRNA3 in the STUB1-VCP-UBXN2A complex. Directly interacts with UBXN4 and RNF19A. Interacts with CASR. Interacts with UBE4B and YOD1. Interacts with clathrin. Interacts with RNF103. Interacts with TRIM13 and TRIM21. Component of a VCP/p97-AMFR/gp78 complex that participates in the final step of the endoplasmic reticulum-associated degradation (ERAD) of HMGCR. Interacts directly with AMFR/gp78 (via its VIM). Interacts with RHBDD1 (via C-terminal domain). Interacts with SPRTN; leading to recruitment to stalled replication forks. Interacts with WASHC5. Interacts with UBOX5. Interacts (via N-terminus) with UBXN7, UBXN8, and probably several other UBX domain-containing proteins (via UBX domains); the interactions are mutually exclusive with VIM-dependent interactions such as those with AMFR and SELENOS. Forms a complex with UBQLN1 and UBXN4. Interacts (via the PIM motif) with RNF31 (via the PUB domain). Interacts with RIGI and RNF125; interaction takes place when RIGI is ubiquitinated via 'Lys-63'-linked ubiquitin on its CARD domains, leading to recruit RNF125 and promote ubiquitination and degradation of RIGI. Interacts with BAG6. Interacts with UBXN10. Interacts with UBXN6; the interaction with UBXN6 is direct and competitive with UFD1. Forms a ternary complex with CAV1 and UBXN6. Interacts with PLAA, UBXN6 and YOD1; may form a complex involved in macroautophagy. Interacts with ANKZF1. Interacts with ubiquitin-binding protein FAF1. Interacts with ZFAND2B (via VIM motif); the interaction is direct. Interacts with ZFAND1 (via its ubiquitin-like region); this interaction occurs in an arsenite-dependent manner. Interacts with CCDC47. Interacts with LMBR1L and UBAC2. Interacts with ATXN3. Interacts with TEX264; bridging VCP to covalent DNA-protein cross-links (DPCs). In terms of processing, ISGylated. Post-translationally, methylation at Lys-315 catalyzed by VCPKMT is increased in the presence of ASPSCR1. Lys-315 methylation may decrease ATPase activity. Phosphorylated by tyrosine kinases in response to T-cell antigen receptor activation. Phosphorylated in mitotic cells.

The protein localises to the cytoplasm. It is found in the cytosol. The protein resides in the endoplasmic reticulum. It localises to the nucleus. Its subcellular location is the stress granule. The catalysed reaction is ATP + H2O = ADP + phosphate + H(+). Its function is as follows. Necessary for the fragmentation of Golgi stacks during mitosis and for their reassembly after mitosis. Involved in the formation of the transitional endoplasmic reticulum (tER). The transfer of membranes from the endoplasmic reticulum to the Golgi apparatus occurs via 50-70 nm transition vesicles which derive from part-rough, part-smooth transitional elements of the endoplasmic reticulum (tER). Vesicle budding from the tER is an ATP-dependent process. The ternary complex containing UFD1, VCP and NPLOC4 binds ubiquitinated proteins and is necessary for the export of misfolded proteins from the ER to the cytoplasm, where they are degraded by the proteasome. The NPLOC4-UFD1-VCP complex regulates spindle disassembly at the end of mitosis and is necessary for the formation of a closed nuclear envelope. Regulates E3 ubiquitin-protein ligase activity of RNF19A. Component of the VCP/p97-AMFR/gp78 complex that participates in the final step of the sterol-mediated ubiquitination and endoplasmic reticulum-associated degradation (ERAD) of HMGCR. Mediates the endoplasmic reticulum-associated degradation of CHRNA3 in cortical neurons as part of the STUB1-VCP-UBXN2A complex. Involved in endoplasmic reticulum stress-induced pre-emptive quality control, a mechanism that selectively attenuates the translocation of newly synthesized proteins into the endoplasmic reticulum and reroutes them to the cytosol for proteasomal degradation. Involved in clearance process by mediating G3BP1 extraction from stress granules. Also involved in DNA damage response: recruited to double-strand breaks (DSBs) sites in a RNF8- and RNF168-dependent manner and promotes the recruitment of TP53BP1 at DNA damage sites. Recruited to stalled replication forks by SPRTN: may act by mediating extraction of DNA polymerase eta (POLH) to prevent excessive translesion DNA synthesis and limit the incidence of mutations induced by DNA damage. Together with SPRTN metalloprotease, involved in the repair of covalent DNA-protein cross-links (DPCs) during DNA synthesis. Involved in interstrand cross-link repair in response to replication stress by mediating unloading of the ubiquitinated CMG helicase complex. Mediates extraction of PARP1 trapped to chromatin: recognizes and binds ubiquitinated PARP1 and promotes its removal. Required for cytoplasmic retrotranslocation of stressed/damaged mitochondrial outer-membrane proteins and their subsequent proteasomal degradation. Essential for the maturation of ubiquitin-containing autophagosomes and the clearance of ubiquitinated protein by autophagy. Acts as a negative regulator of type I interferon production by interacting with RIGI: interaction takes place when RIGI is ubiquitinated via 'Lys-63'-linked ubiquitin on its CARD domains, leading to recruit RNF125 and promote ubiquitination and degradation of RIGI. May play a role in the ubiquitin-dependent sorting of membrane proteins to lysosomes where they undergo degradation. May more particularly play a role in caveolins sorting in cells. By controlling the steady-state expression of the IGF1R receptor, indirectly regulates the insulin-like growth factor receptor signaling pathway. The chain is Transitional endoplasmic reticulum ATPase (VCP) from Bos taurus (Bovine).